The primary structure comprises 181 residues: 6,7-dimethyl-8-ribityllumazine synthase (181 aa).

Residues Tyr-30, 61 to 63 (ALE), and 87 to 89 (CII) contribute to the 5-amino-6-(D-ribitylamino)uracil site. 92–93 (ET) lines the (2S)-2-hydroxy-3-oxobutyl phosphate pocket. Residue His-95 is the Proton donor of the active site. A 5-amino-6-(D-ribitylamino)uracil-binding site is contributed by Asn-120. Residue Arg-134 participates in (2S)-2-hydroxy-3-oxobutyl phosphate binding.

This sequence belongs to the DMRL synthase family.

It catalyses the reaction (2S)-2-hydroxy-3-oxobutyl phosphate + 5-amino-6-(D-ribitylamino)uracil = 6,7-dimethyl-8-(1-D-ribityl)lumazine + phosphate + 2 H2O + H(+). Its pathway is cofactor biosynthesis; riboflavin biosynthesis; riboflavin from 2-hydroxy-3-oxobutyl phosphate and 5-amino-6-(D-ribitylamino)uracil: step 1/2. Its function is as follows. Catalyzes the formation of 6,7-dimethyl-8-ribityllumazine by condensation of 5-amino-6-(D-ribitylamino)uracil with 3,4-dihydroxy-2-butanone 4-phosphate. This is the penultimate step in the biosynthesis of riboflavin. The chain is 6,7-dimethyl-8-ribityllumazine synthase from Beijerinckia indica subsp. indica (strain ATCC 9039 / DSM 1715 / NCIMB 8712).